Here is a 495-residue protein sequence, read N- to C-terminus: Dipeptide and tripeptide permease A (495 aa).

The Cytoplasmic segment spans residues 1 to 20 (MTTSALNPLRQPKPFYLIFS). The chain crosses the membrane as a helical span at residues 21–41 (IEFWERFGFYGLQGILAVYLV). At 42 to 51 (KALGLREADS) the chain is on the periplasmic side. The chain crosses the membrane as a helical span at residues 52–72 (FTLFSSFIALVYGLIAVGGWL). At 73–81 (GDKVLGTKR) the chain is on the cytoplasmic side. The next 2 helical transmembrane spans lie at 82–102 (TILL…ASSE) and 103–123 (HISL…LFKA). Over 124-145 (NPSSLLSKCYEENDPRLDGAFT) the chain is Periplasmic. The chain crosses the membrane as a helical span at residues 146–166 (MYYMAINIGSLLSMLATPWLA). Residues 167–171 (DQFGY) lie on the Cytoplasmic side of the membrane. A helical membrane pass occupies residues 172–192 (AHAFALSVVGMLITVANFILM). At 193-209 (QGWVKNYGSDADFRTPR) the chain is on the periplasmic side. The helical transmembrane segment at 210–230 (LSTWLAVLAGVVAACAAAALL) threads the bilayer. The Cytoplasmic segment spans residues 231–232 (LK). A helical membrane pass occupies residues 233-253 (HEIIANVVLAVLSIGVVGLYV). The Periplasmic segment spans residues 254–266 (KETLLLKGAERKK). Residues 267–287 (MIVAAILMLQATVFFVLYNQM) traverse the membrane as a helical segment. Over 288-312 (PLSLNFFAIHNTEHMLFGIPVQPEQ) the chain is Cytoplasmic. A helical membrane pass occupies residues 313–333 (FQSLNPFWIMLASPLLALCYN). Topologically, residues 334–344 (KLGNRLPMPHK) are periplasmic. A helical membrane pass occupies residues 345 to 365 (FAIGMVLCAGAFLVLPLGAKY). The Cytoplasmic portion of the chain corresponds to 366–375 (ANAQGLVSSN). The chain crosses the membrane as a helical span at residues 376-396 (WMVLSYLLQSVGELLISGLGL). Over 397 to 409 (AMVAQLVPQRLMG) the chain is Periplasmic. Residues 410–430 (FIMGAWFLTSAASSVIAGWVA) traverse the membrane as a helical segment. Residues 431–451 (GLTAAPDNVTNPLATLEIYSR) are Cytoplasmic-facing. A helical transmembrane segment spans residues 452-472 (VFTQIGVVTGVIAVVTIIIAP). The Periplasmic portion of the chain corresponds to 473 to 495 (WLHRMTLDEKPAHPEHEMALDAR).

Belongs to the major facilitator superfamily. Proton-dependent oligopeptide transporter (POT/PTR) (TC 2.A.17) family. DtpA subfamily.

The protein localises to the cell inner membrane. In terms of biological role, proton-dependent permease that transports di- and tripeptides. The polypeptide is Dipeptide and tripeptide permease A (Chromobacterium violaceum (strain ATCC 12472 / DSM 30191 / JCM 1249 / CCUG 213 / NBRC 12614 / NCIMB 9131 / NCTC 9757 / MK)).